We begin with the raw amino-acid sequence, 279 residues long: Putative pyruvate, phosphate dikinase regulatory protein (279 aa).

153–160 (GISRTSKT) contributes to the ADP binding site.

This sequence belongs to the pyruvate, phosphate/water dikinase regulatory protein family. PDRP subfamily.

The enzyme catalyses N(tele)-phospho-L-histidyl/L-threonyl-[pyruvate, phosphate dikinase] + ADP = N(tele)-phospho-L-histidyl/O-phospho-L-threonyl-[pyruvate, phosphate dikinase] + AMP + H(+). It carries out the reaction N(tele)-phospho-L-histidyl/O-phospho-L-threonyl-[pyruvate, phosphate dikinase] + phosphate + H(+) = N(tele)-phospho-L-histidyl/L-threonyl-[pyruvate, phosphate dikinase] + diphosphate. In terms of biological role, bifunctional serine/threonine kinase and phosphorylase involved in the regulation of the pyruvate, phosphate dikinase (PPDK) by catalyzing its phosphorylation/dephosphorylation. The sequence is that of Putative pyruvate, phosphate dikinase regulatory protein from Bartonella bacilliformis (strain ATCC 35685 / KC583 / Herrer 020/F12,63).